The primary structure comprises 278 residues: MKTTKDFWVMKNEGKKIVMITAYDYPSAKQAEQAGADIILVGDSLGNVVLGYDSTVYVTMEDMIHHGKAAKRGAPNTFIVADMPFMSCHLSIRDTLLNGARLIQETGAQAVKVEGADEMIPHIRALVRAGIPVVSHLGLTPQTAAVLGGFKVRGKDGEAARKMLEDVKECQEAGAFALVLECIPKQLAQEISTNLTIPTIGIGAGVHTDGQVLVYHDILTYGVNRAPKFVKAYANADQLMLKGLQDYADEVRSMNFPDDEHSFTMKEEELKTLYGGRG.

Residues Asp-43 and Asp-82 each contribute to the Mg(2+) site. 3-methyl-2-oxobutanoate contacts are provided by residues 43-44, Asp-82, and Lys-112; that span reads DS. Position 114 (Glu-114) interacts with Mg(2+). Glu-181 acts as the Proton acceptor in catalysis.

This sequence belongs to the PanB family. As to quaternary structure, homodecamer; pentamer of dimers. Requires Mg(2+) as cofactor.

The protein localises to the cytoplasm. It catalyses the reaction 3-methyl-2-oxobutanoate + (6R)-5,10-methylene-5,6,7,8-tetrahydrofolate + H2O = 2-dehydropantoate + (6S)-5,6,7,8-tetrahydrofolate. It functions in the pathway cofactor biosynthesis; (R)-pantothenate biosynthesis; (R)-pantoate from 3-methyl-2-oxobutanoate: step 1/2. Functionally, catalyzes the reversible reaction in which hydroxymethyl group from 5,10-methylenetetrahydrofolate is transferred onto alpha-ketoisovalerate to form ketopantoate. This Desulfitobacterium hafniense (strain Y51) protein is 3-methyl-2-oxobutanoate hydroxymethyltransferase.